The chain runs to 424 residues: MGITIVLGSQWGDEGKGKITDMLSQQATLCCRAAGGHNAGHTIVHENITYDFHILPSGLVSPSCVNLIGAGTVVHVPSFFKELASLEEKGLKDAGKRIFISDRAHVCFDLHSVVDGLEEAKLGGRKVGTTGKGIGPCYSDKAARRGVRIGEIMDEAVFERKLRSLHAGYTARFGELEYDVEEEIGRFKDYRKRLVPYVVDQLAFFKQYKDSPNTLVEGANALMLDLDHGTYPYVTSSSTGLGGAVQALSLNPTSITSVIGVVKAYTTRVGSGPFPSEQLNEYGDKLQSVGREFGVTTGRRRRCGWFDLVLCRYSQAINHYTALNLTKLDILDDFDEIKVAVAYVLPDGTRLTDTYPADADLLEKVKVEYVSLPGWKSNTMGVRKYEDLPANARAYIEYIERELGGVPVKWIGTGPARDHMICRE.

GTP-binding positions include Gly-12–Lys-18 and Gly-40–Thr-42. Asp-13 functions as the Proton acceptor in the catalytic mechanism. Mg(2+)-binding residues include Asp-13 and Gly-40. IMP is bound by residues Asp-13 to Lys-16, Asn-38 to His-41, Thr-130, Arg-144, Asn-220, Thr-235, and Arg-299. The active-site Proton donor is the His-41. Val-295–Arg-301 is a binding site for substrate. GTP is bound by residues Arg-301, Lys-327–Asp-329, and Gly-412–Gly-414.

This sequence belongs to the adenylosuccinate synthetase family. As to quaternary structure, homodimer. It depends on Mg(2+) as a cofactor.

It is found in the cytoplasm. The enzyme catalyses IMP + L-aspartate + GTP = N(6)-(1,2-dicarboxyethyl)-AMP + GDP + phosphate + 2 H(+). The protein operates within purine metabolism; AMP biosynthesis via de novo pathway; AMP from IMP: step 1/2. In terms of biological role, plays an important role in the de novo pathway and in the salvage pathway of purine nucleotide biosynthesis. Catalyzes the first committed step in the biosynthesis of AMP from IMP. The sequence is that of Adenylosuccinate synthetase from Neosartorya fischeri (strain ATCC 1020 / DSM 3700 / CBS 544.65 / FGSC A1164 / JCM 1740 / NRRL 181 / WB 181) (Aspergillus fischerianus).